The primary structure comprises 246 residues: Bis(5'-nucleosyl)-tetraphosphatase PrpE [asymmetrical] (246 aa).

The protein belongs to the PrpE family. Requires Ni(2+) as cofactor.

The enzyme catalyses P(1),P(4)-bis(5'-guanosyl) tetraphosphate + H2O = GMP + GTP + 2 H(+). Its function is as follows. Asymmetrically hydrolyzes Ap4p to yield AMP and ATP. This chain is Bis(5'-nucleosyl)-tetraphosphatase PrpE [asymmetrical], found in Bacillus mycoides (strain KBAB4) (Bacillus weihenstephanensis).